The sequence spans 215 residues: Thiopurine S-methyltransferase (215 aa).

Residues Trp10, Leu45, Glu66, and Arg123 each coordinate S-adenosyl-L-methionine.

The protein belongs to the class I-like SAM-binding methyltransferase superfamily. TPMT family.

Its subcellular location is the cytoplasm. The enzyme catalyses S-adenosyl-L-methionine + a thiopurine = S-adenosyl-L-homocysteine + a thiopurine S-methylether.. The polypeptide is Thiopurine S-methyltransferase (Pseudomonas putida (strain W619)).